Here is a 96-residue protein sequence, read N- to C-terminus: Muconolactone Delta-isomerase 1 (96 aa).

This sequence belongs to the muconolactone Delta-isomerase family. In terms of assembly, homodecamer.

It catalyses the reaction (S)-muconolactone = (4,5-dihydro-5-oxofuran-2-yl)-acetate. Its pathway is aromatic compound metabolism; beta-ketoadipate pathway; 5-oxo-4,5-dihydro-2-furylacetate from catechol: step 3/3. In Acinetobacter lwoffii, this protein is Muconolactone Delta-isomerase 1 (catC1).